The sequence spans 426 residues: MLDNQLLRENPQYVATQLLKRGFQFDAVTFSQLEEKRKALQVSTQSLQNERNLRSKAIGEAKSRGENIEPMREEVNKLGAKLEQQKTELDEILKQIEVISLSLPNIPHESVPVGKDELDNQEIRKWGDVPAFSFPVKSHDELGEALGQMDFALAAKITGSRFVVMKGHLARLHRALIQFMLDIHIQQHGYQEIYVPYIVNADSLLGTGQLPKFEADLFKLTGDNGYYLTSTSEIPVTNTVREMILSAEQLPIRYVCHSPCFRSEAGSYGKDTKGMIRQHQFEKVELVWITKPEDSYNALEQLTQHAEVILQRLNLPYRVVALCTGDIGAGSAKTYDLEVWLPSQNTYREISSCSNMEAFQARRMKARFRNPDTNEIQLVHTLNGSGLAVGRTLVAIMENYQDEHGNIHIPDALKPYLGGIDIISVK.

L-serine is bound at residue 231–233 (TSE). Residue 262–264 (RSE) participates in ATP binding. Glu-285 serves as a coordination point for L-serine. 349–352 (EISS) contributes to the ATP binding site. Ser-385 contributes to the L-serine binding site.

Belongs to the class-II aminoacyl-tRNA synthetase family. Type-1 seryl-tRNA synthetase subfamily. As to quaternary structure, homodimer. The tRNA molecule binds across the dimer.

It localises to the cytoplasm. It carries out the reaction tRNA(Ser) + L-serine + ATP = L-seryl-tRNA(Ser) + AMP + diphosphate + H(+). The catalysed reaction is tRNA(Sec) + L-serine + ATP = L-seryl-tRNA(Sec) + AMP + diphosphate + H(+). It functions in the pathway aminoacyl-tRNA biosynthesis; selenocysteinyl-tRNA(Sec) biosynthesis; L-seryl-tRNA(Sec) from L-serine and tRNA(Sec): step 1/1. Catalyzes the attachment of serine to tRNA(Ser). Is also able to aminoacylate tRNA(Sec) with serine, to form the misacylated tRNA L-seryl-tRNA(Sec), which will be further converted into selenocysteinyl-tRNA(Sec). The chain is Serine--tRNA ligase from Legionella pneumophila (strain Paris).